The chain runs to 927 residues: Protein unc-45 homolog B (927 aa).

3 TPR repeats span residues 4 to 37, 41 to 74, and 76 to 108; these read PVQLKEEGNKYFQSNEYGQAIQCYSKALKLITDK, AVLYRNRSACYLKQDNYVQAAADASKAIDVDASD, and KALFRRCQALEKLGKLDQAYKDVQRCATLEPKN. ARM repeat units lie at residues 167–206, 209–248, and 746–785; these read DAGAEQIFQNNGVNLLMQLIESKDPEMILSAIRTLSGMCT, RARATAIVHLVGINKICSIMAVDNEEIALAACNLLQNIVD, and DKLRQKIIKEKALPEIENYMFENHEQIRQAATECMCNLAL.

Detected initially throughout the somites and the heart and gradually also expressed in the jaw, branchial arches and body wall muscles at later embryonic stages.

It localises to the cytoplasm. It is found in the myofibril. Its subcellular location is the sarcomere. The protein localises to the z line. The protein resides in the a band. It localises to the perinuclear region. It is found in the cytosol. Acts as a co-chaperone for HSP90 and is required for proper folding of the myosin motor domain. Plays a role in sarcomere formation during muscle cell development. Is necessary for normal early lens development. In Xenopus tropicalis (Western clawed frog), this protein is Protein unc-45 homolog B.